The sequence spans 380 residues: ER-phagy receptor 1 (380 aa).

The J domain occupies Asp9 to Tyr74. The C2H2-type zinc finger occupies Ile270–His294. The segment at Lys307–Ser337 is disordered. Position 344 is a phosphoserine (Ser344). Residues Phe352 to Val355 carry the AIM motif. Positions Glu361 to Glu367 match the FFAT motif.

As to quaternary structure, interacts (via the AIM motif) with atg8. Interacts (via the FFAT motif) with the vesicle-associated membrane protein-associated protein (VAP) family proteins scs2 and scs22.

The protein localises to the endoplasmic reticulum. The protein resides in the preautophagosomal structure. In terms of biological role, reticulophagy receptor required for autophagosomal sequestration of endoplasmic reticulum (ER) membranes during ER stress. Confers resistance to ER stress by promoting the autophagic degradation of the ER (ER-phagy or reticulophagy). Acts as a bridging molecule to mediate the association between atg8 on the autophagic membrane and the vesicle-associated membrane protein-associated proteins (VAPs) scs2 and scs22 on the ER. May play a role in meiosis. In Schizosaccharomyces pombe (strain 972 / ATCC 24843) (Fission yeast), this protein is ER-phagy receptor 1.